The chain runs to 146 residues: Ferredoxin-thioredoxin reductase catalytic chain, chloroplastic (146 aa).

The transit peptide at 1–26 (MMSMASTTASPFCPSPMPRGRKCTVR) directs the protein to the chloroplast. Cys85 lines the [4Fe-4S] cluster pocket. Catalysis depends on Cys87, which acts as the Nucleophile. Cys87 and Cys117 are joined by a disulfide. Residues Cys104, Cys106, and Cys115 each contribute to the [4Fe-4S] cluster site.

This sequence belongs to the ferredoxin thioredoxin reductase beta subunit family. Heterodimer of subunit A (variable subunit) and subunit B (catalytic subunit). Heterodimeric FTR forms a complex with ferredoxin and thioredoxin. It depends on [4Fe-4S] cluster as a cofactor.

It is found in the plastid. Its subcellular location is the chloroplast. It catalyses the reaction [thioredoxin]-disulfide + 2 reduced [2Fe-2S]-[ferredoxin] + 2 H(+) = [thioredoxin]-dithiol + 2 oxidized [2Fe-2S]-[ferredoxin]. In terms of biological role, catalytic subunit of the ferredoxin-thioredoxin reductase (FTR), which catalyzes the two-electron reduction of thioredoxins by the electrons provided by reduced ferredoxin. The polypeptide is Ferredoxin-thioredoxin reductase catalytic chain, chloroplastic (Oryza sativa subsp. japonica (Rice)).